Here is a 399-residue protein sequence, read N- to C-terminus: PCI domain-containing protein 2 (399 aa).

A2 is subject to N-acetylalanine. Phosphoserine is present on S45. A PCI domain is found at 210 to 391 (ITYKYYVGRK…QKLVVSKQNP (182 aa)).

The protein belongs to the CSN12 family. Component of the nuclear pore complex (NPC)-associated TREX-2 complex (transcription and export complex 2), composed of at least GANP, 2 copies of ENY2, PCID2, SEM1/DSS1, and either centrin CETN2 or centrin CETN3. The TREX-2 complex also associates with ALYREF/ALY and with the nucleoporin NUP153. Interacts with BRCA2. Interacts with SRCAP chromatin remodeling complex component ZNHIT1; the interaction results in inhibition of SRCAP complex activity, preventing the deposition of histone variant H2AZ1/H2A.Z to lymphoid fate regulator genes and restricting lymphoid lineage commitment. Highly expressed in bone marrow and haematopoietic progenitor cells but is almost undetectable in mature blood cells.

It localises to the cytoplasm. It is found in the nucleus. The protein resides in the nuclear pore complex. Functionally, required for B-cell survival through the regulation of the expression of cell-cycle checkpoint MAD2L1 protein during B cell differentiation. As a component of the TREX-2 complex, involved in the export of mRNAs to the cytoplasm through the nuclear pores. Binds and stabilizes BRCA2 and is thus involved in the control of R-loop-associated DNA damage and transcription-associated genomic instability. Blocks the activity of the SRCAP chromatin remodeling complex by interacting with SRCAP complex member ZNHIT1 and inhibiting its interaction with the complex. This prevents the deposition of histone variant H2AZ1/H2A.Z at the nucleosomes of key lymphoid fate regulator genes which suppresses their expression and restricts lymphoid lineage commitment. The sequence is that of PCI domain-containing protein 2 (Pcid2) from Mus musculus (Mouse).